We begin with the raw amino-acid sequence, 1082 residues long: Integrator complex subunit 3 homolog (1082 aa).

3 disordered regions span residues 483-563, 923-945, and 1005-1082; these read PGPP…VSDD, YPSN…TAPT, and DETS…SDSD. 2 stretches are compositionally biased toward low complexity: residues 517–528 and 542–555; these read PAAKAASTAASA and TKPA…TTTT. Residues 936–945 are compositionally biased toward polar residues; sequence KSAQQNTAPT. Composition is skewed to low complexity over residues 1008 to 1018 and 1033 to 1056; these read STTVGRRGTSS and EKAA…ASAK.

Belongs to the Integrator subunit 3 family. As to quaternary structure, belongs to the multiprotein complex Integrator. The core complex associates with protein phosphatase 2A subunits, to form the Integrator-PP2A (INTAC) complex.

It localises to the nucleus. The protein resides in the cytoplasm. Component of the integrator complex, a multiprotein complex that terminates RNA polymerase II (Pol II) transcription in the promoter-proximal region of genes. The integrator complex provides a quality checkpoint during transcription elongation by driving premature transcription termination of transcripts that are unfavorably configured for transcriptional elongation: the complex terminates transcription by (1) catalyzing dephosphorylation of the C-terminal domain (CTD) of Pol II subunit Polr2A/Rbp1 and Spt5, and (2) degrading the exiting nascent RNA transcript via endonuclease activity. The integrator complex is also involved in the 3'-end processing of the U7 snRNA, and also the spliceosomal snRNAs U1, U2, U4 and U5. The sequence is that of Integrator complex subunit 3 homolog from Anopheles gambiae (African malaria mosquito).